A 1037-amino-acid chain; its full sequence is Outer dynein arm-docking complex subunit 2 (1037 aa).

Basic and acidic residues-rich tracts occupy residues 316–334 (EEQQKDNQIFEKPKTEDGH) and 376–391 (SSIKDSQEEKQGKLEK). 2 disordered regions span residues 316–353 (EEQQKDNQIFEKPKTEDGHSSVAGSEKSKIEKISFGKS) and 376–439 (SSIK…ANAD). ARM repeat units follow at residues 477–516 (ETCQLAIRDVGGLEVLINLLDTDEVKCKIGSLKILKEISH), 518–557 (PQIRRNIVDLGGLPIMVNILDSPHKSLKCLSAETIANVAK), 528–570 (GGLP…QHGG), 615–654 (HSNKEAIRKAGGIPLLARLLKTSHENMLIPVVGTLQECAS), 656–695 (ENYRAAIKAERIIENLVKNLNSENEQLQEHCAMAIYQCAE), 739–778 (KENVIKFREYKAIETLVGLLTDQPEEVLVNVVGALGECCQ), 821–860 (PESMAIIDRLDGVRLLWSLLKNPHPDVKASAAWALCPCIE), 864–903 (DAGEMVRSFVGGLELVVNLLKSDNKEVLASVCAAITNIAK), 905–944 (QENLAVITDHGVVPLLSKLANTNNDKLRRHLAEAISRCCM), and 946–985 (GRNRVAFGEHKAVAPLVRYLKSNDTNVHRATAQALYQLSE). Lysine 545 bears the N6-methyllysine mark.

As to quaternary structure, component of the outer dynein arm-docking complex along with ODAD1, ODAD3, and ODAD4. Interacts with CFAP61. As to expression, highly expressed in testis. In males, also detected at lower levels in lung, brain, liver and muscle. In females, detected in ovary.

The protein resides in the cytoplasm. The protein localises to the cytoskeleton. It is found in the cilium axoneme. It localises to the cilium basal body. Its function is as follows. Component of the outer dynein arm-docking complex (ODA-DC) that mediates outer dynein arms (ODA) binding onto the doublet microtubule. Involved in mediating assembly of both ODAs and their axonemal docking complex onto ciliary microtubules. This Mus musculus (Mouse) protein is Outer dynein arm-docking complex subunit 2.